The primary structure comprises 100 residues: Serine protease inhibitor 1 protein (100 aa).

Residues 1-20 (MKHLLIVSLVFVTIIWKIEC) form the signal peptide. Intrachain disulfides connect C42-C74, C51-C69, C54-C65, C58-C93, and C76-C90. The TIL domain maps to 42 to 93 (CGLNEVWMVCSSCEEECGKTPQPCPRICQPARCQCPAHKGYRRDGQGNCIFC).

Its subcellular location is the secreted. The sequence is that of Serine protease inhibitor 1 protein from Caenorhabditis elegans.